Consider the following 115-residue polypeptide: Large ribosomal subunit protein P2 (115 aa).

Residue M1 is modified to N-acetylmethionine. 2 positions are modified to phosphoserine: S17 and S19. An N6-acetyllysine; alternate modification is found at K21. The residue at position 21 (K21) is an N6-succinyllysine; alternate. The segment covering 76 to 90 has biased composition (low complexity); that stretch reads APGSAAPAAGSAPAA. The tract at residues 76–115 is disordered; the sequence is APGSAAPAAGSAPAAAEEKKDEKKEESEESDDDMGFGLFD. Residues S79 and S86 each carry the phosphoserine modification. Basic and acidic residues predominate over residues 91 to 101; it reads AEEKKDEKKEE. S102 and S105 each carry phosphoserine.

This sequence belongs to the eukaryotic ribosomal protein P1/P2 family. In terms of assembly, heterodimer with RPLP1 at the lateral ribosomal stalk of the large ribosomal subunit.

In terms of biological role, plays an important role in the elongation step of protein synthesis. In Mus musculus (Mouse), this protein is Large ribosomal subunit protein P2 (Rplp2).